The sequence spans 903 residues: Protein translocase subunit SecA (903 aa).

Residues Q85, 103–107, and D492 each bind ATP; that span reads GEGKT. The tract at residues 863–890 is disordered; it reads GDGVKQPVRRDKKVGRNSPCPCGSGKKY. 4 residues coordinate Zn(2+): C882, C884, C893, and C894.

It belongs to the SecA family. In terms of assembly, monomer and homodimer. Part of the essential Sec protein translocation apparatus which comprises SecA, SecYEG and auxiliary proteins SecDF. Other proteins may also be involved. The cofactor is Zn(2+).

Its subcellular location is the cell membrane. The protein resides in the cytoplasm. It catalyses the reaction ATP + H2O + cellular proteinSide 1 = ADP + phosphate + cellular proteinSide 2.. Its function is as follows. Part of the Sec protein translocase complex. Interacts with the SecYEG preprotein conducting channel. Has a central role in coupling the hydrolysis of ATP to the transfer of proteins into and across the cell membrane, serving as an ATP-driven molecular motor driving the stepwise translocation of polypeptide chains across the membrane. In Desulforudis audaxviator (strain MP104C), this protein is Protein translocase subunit SecA.